The primary structure comprises 544 residues: GMP synthase [glutamine-hydrolyzing] (544 aa).

A Glutamine amidotransferase type-1 domain is found at 12–210 (TILILDFGSQ…VKNVCGVRDG (199 aa)). Catalysis depends on C88, which acts as the Nucleophile. Active-site residues include H184 and E186. The 209-residue stretch at 211–419 (WSMESFIPKE…LNIPEHLVGR (209 aa)) folds into the GMPS ATP-PPase domain. 239–245 (SGGVDST) is a binding site for ATP. 4 residues coordinate XMP: R312, D481, K536, and E542.

In terms of assembly, homodimer. Also forms a small population of homotetramers. Mg(2+) serves as cofactor.

Its subcellular location is the cytoplasm. It is found in the cytosol. The catalysed reaction is XMP + L-glutamine + ATP + H2O = GMP + L-glutamate + AMP + diphosphate + 2 H(+). It functions in the pathway purine metabolism; GMP biosynthesis; GMP from XMP (L-Gln route): step 1/1. With respect to regulation, the enzyme is inhibited by ECC1385; although this compound fails to inhibit growth of the organism. Its function is as follows. Catalyzes the conversion of xanthine monophosphate (XMP) to GMP in the presence of glutamine and ATP through an adenyl-XMP intermediate. The sequence is that of GMP synthase [glutamine-hydrolyzing] from Cryptococcus neoformans var. grubii serotype A (strain H99 / ATCC 208821 / CBS 10515 / FGSC 9487) (Filobasidiella neoformans var. grubii).